The sequence spans 78 residues: Serine rich endogenous peptide 12 (78 aa).

The first 24 residues, 1-24 (MRNTISSKMGQVLIVLLLLCTVLC), serve as a signal peptide directing secretion. The propeptide at 25-43 (RTESALPSGQHSVLLTGRR) is removed in mature form. The disordered stretch occupies residues 47-78 (SGASGPVRSSQSSQAGGRFNDADPIAIDYGKY). An SCOOP motif motif is present at residues 50-64 (SGPVRSSQSSQAGGR). Residues 56–58 (SQS) carry the SxS motif essential for MIK2 binding motif.

It belongs to the serine rich endogenous peptide (SCOOP) phytocytokine family. As to quaternary structure, interacts with MIK2 (via extracellular leucine-rich repeat domain); this interaction triggers the formation of complex between MIK2 and the BAK1/SERK3 and SERK4 coreceptors, and subsequent BAK1 activation by phosphorylation on 'Ser-612'. As to expression, mostly expressed in the whole root system, and, to a lower extent, in seedlings shoots.

It is found in the cell membrane. It localises to the secreted. The protein resides in the extracellular space. The protein localises to the apoplast. In terms of biological role, brassicaceae-specific phytocytokine (plant endogenous peptide released into the apoplast) perceived by MIK2 in a BAK1/SERK3 and SERK4 coreceptors-dependent manner, that modulates various physiological and antimicrobial processes including root growth prevention, phospholipid signaling pathway activation (e.g. accumulation of phosphatidic acid (PA), but transient reduction of phosphatidylinositol 4,5-bisphosphate (PIP(2)) levels) and reactive oxygen species (ROS) response regulation. Moderates primary root growth, and regulates root meristems and cell elongation; this root growth regulation is associated with the modulation of ROS metabolism and alteration of cell wall structure, and depends on variations in many genes expression. Promotes ROS (e.g. superoxide anion O(2) and hydrogen peroxide H(2)O(2)) production and MAPK (e.g. MPK3, MPK4 and MPK6) activation in a MIK2-dependent manner, thus leading to the up-regulation of immune-related marker genes (e.g. WRKY30, WRKY33 and CYP81F2). Involved in biotic and oxidative stress responses; acts as a negative regulator of defense against necrotrophic pathogens such as the bacteria Erwinia amylovora and the fungus Alternaria brassicicola. Able to prime defense responses against the pathogenic bacteria Pseudomonas syringae pv. tomato DC3000. Contributes to the triggering of defense responses toward generalist herbivores such as Spodoptera littoralis, probably via the activation of jasmonate and indole glucosinolate biosynthesis. Triggers the expression of several PROSCOOP genes (e.g. PROSCOOP3, PROSCOOP7, PROSCOOP12 and PROSCOOP13). This is Serine rich endogenous peptide 12 from Arabidopsis thaliana (Mouse-ear cress).